Consider the following 89-residue polypeptide: Small ribosomal subunit protein uS15 (89 aa).

This sequence belongs to the universal ribosomal protein uS15 family. As to quaternary structure, part of the 30S ribosomal subunit. Forms a bridge to the 50S subunit in the 70S ribosome, contacting the 23S rRNA.

In terms of biological role, one of the primary rRNA binding proteins, it binds directly to 16S rRNA where it helps nucleate assembly of the platform of the 30S subunit by binding and bridging several RNA helices of the 16S rRNA. Functionally, forms an intersubunit bridge (bridge B4) with the 23S rRNA of the 50S subunit in the ribosome. This chain is Small ribosomal subunit protein uS15, found in Nitrosomonas eutropha (strain DSM 101675 / C91 / Nm57).